A 343-amino-acid chain; its full sequence is MTERTLTLAFESSCDETSVAVIENGTKILSNIVATQIDSHQRFGGVVPEVASRHHIEQITKCTNEALEQADVDYNDLDAVAVTYGPGLVGSLLIGVTAAKAIAWAHNLPLVPVNHMAGHIYAARYVGEFQYPQMALLVSGGHTELVYMPSEHEYQIIGETRDDAAGEAYDKIGRVLGVNYPAGKTIDEWAAKGKDTFNFPRAMEKEDNYDFSFSGLKSAFINTVHNADQRGEKLDKYDLAASFQQSVIDVLAEKTMRALDDYPVKQLILAGGVAANHGLRARLDHDMKEFHPDVPMLQAPLKLCGDNAAMIGAAGYVNYKHGDRAGLDLNAVPGLMFDRIQSK.

Fe cation is bound by residues His-115 and His-119. Residues 137 to 141, Asp-170, Gly-183, Asp-187, and Asn-276 contribute to the substrate site; that span reads LVSGG. Position 306 (Asp-306) interacts with Fe cation.

This sequence belongs to the KAE1 / TsaD family. Fe(2+) is required as a cofactor.

It localises to the cytoplasm. The enzyme catalyses L-threonylcarbamoyladenylate + adenosine(37) in tRNA = N(6)-L-threonylcarbamoyladenosine(37) in tRNA + AMP + H(+). In terms of biological role, required for the formation of a threonylcarbamoyl group on adenosine at position 37 (t(6)A37) in tRNAs that read codons beginning with adenine. Is involved in the transfer of the threonylcarbamoyl moiety of threonylcarbamoyl-AMP (TC-AMP) to the N6 group of A37, together with TsaE and TsaB. TsaD likely plays a direct catalytic role in this reaction. The polypeptide is tRNA N6-adenosine threonylcarbamoyltransferase (Limosilactobacillus reuteri (strain DSM 20016) (Lactobacillus reuteri)).